The following is a 600-amino-acid chain: Oligopeptide-binding protein OppA (600 aa).

The first 22 residues, 1–22, serve as a signal peptide directing secretion; that stretch reads MNKLKVTLLASSVVLAATLLSA. A lipid anchor (N-palmitoyl cysteine) is attached at Cys-23. A lipid anchor (S-diacylglycerol cysteine) is attached at Cys-23.

It belongs to the bacterial solute-binding protein 5 family. The complex is composed of two ATP-binding proteins (OppD and OppF), two transmembrane proteins (OppB and OppC) and a solute-binding protein (OppA).

It localises to the cell membrane. Functionally, part of the ABC transporter complex OppABCDF involved in the uptake of oligopeptides. The polypeptide is Oligopeptide-binding protein OppA (Lactococcus lactis subsp. cremoris (strain SK11)).